The primary structure comprises 314 residues: WD repeat-containing protein 38 (314 aa).

7 WD repeats span residues 19-58 (QHGG…LLWR), 61-100 (GHTG…CLRV), 103-142 (GHQR…MLRL), 145-184 (GHRD…PAVS), 190-228 (GHSA…LLIQ), 231-272 (GHVT…ETLK), and 274-312 (VLDV…PRDP). The tract at residues 294-314 (AADQTRRQISRTSKSPRDPQT) is disordered.

This is WD repeat-containing protein 38 (WDR38) from Homo sapiens (Human).